We begin with the raw amino-acid sequence, 721 residues long: Glycine--tRNA ligase beta subunit (721 aa).

Belongs to the class-II aminoacyl-tRNA synthetase family. Tetramer of two alpha and two beta subunits.

The protein resides in the cytoplasm. The catalysed reaction is tRNA(Gly) + glycine + ATP = glycyl-tRNA(Gly) + AMP + diphosphate. The chain is Glycine--tRNA ligase beta subunit from Sinorhizobium medicae (strain WSM419) (Ensifer medicae).